The chain runs to 358 residues: Putative zinc metalloprotease BH06270 (358 aa).

Histidine 7 is a binding site for Zn(2+). The active site involves glutamate 8. Histidine 11 lines the Zn(2+) pocket. 3 helical membrane passes run 89–111 (ATVFAGPLFNVLFTVVILTFFFF), 282–304 (FLSLLNFTAFLSIGVGLINLFPI), and 332–354 (IIFRLGLCFVLLFMFFALFNDYF). Residues 102–177 (TVVILTFFFF…IEFKMERSGQ (76 aa)) enclose the PDZ domain.

Belongs to the peptidase M50B family. The cofactor is Zn(2+).

The protein resides in the cell inner membrane. This Bartonella henselae (strain ATCC 49882 / DSM 28221 / CCUG 30454 / Houston 1) (Rochalimaea henselae) protein is Putative zinc metalloprotease BH06270.